The primary structure comprises 376 residues: Polycomb group protein FIE1 (376 aa).

WD repeat units lie at residues 85 to 127 (DKDE…LLKT), 130 to 170 (GHGD…CILI), 176 to 216 (GHRN…PYVE), 242 to 279 (VHSN…QSPG), 291 to 332 (VPEC…PVLT), and 339 to 376 (QCKS…HPKA).

It belongs to the WD repeat ESC family. As to quaternary structure, interacts with EZ1. Component of the polycomb repressive complex 2 (PRC2), composed of the core PRC2 components EMF2B, EZ1 and CLF. PRC2 methylates 'Lys-27' residues of histone H3 (H3K27me3), leading to transcriptional repression of the affected target gene. As to expression, widely expressed.

In terms of biological role, polycomb group (PcG) protein. PcG proteins act by forming multiprotein complexes, which are required to maintain the transcriptionally repressive state of homeotic genes throughout development. PcG proteins are not required to initiate repression, but to maintain it during later stages of development. They act via the methylation of histones, rendering chromatin heritably changed in its expressibility. Involved in the regulation of seed endosperm development, grain filling and seed dormancy. FIE2-containing PcG complex in seed endosperm regulates the expression of various transcription factors by trimethylation on histone H3 'Lys-27' (H3K27me3) of target genes. Involved in the overall expression regulation of a large number of nutrient metabolism genes. Involved in the regulation of seed endosperm development. Involved in the regulation of vegetative development, particularly in stem cell maintenance in the root system, where it maintains the suppression of key differentiation regulators. The chain is Polycomb group protein FIE1 from Oryza sativa subsp. japonica (Rice).